A 259-amino-acid chain; its full sequence is Hydroxyacylglutathione hydrolase (259 aa).

Positions 56, 58, 60, 61, 112, 133, and 171 each coordinate Zn(2+).

It belongs to the metallo-beta-lactamase superfamily. Glyoxalase II family. Monomer. Requires Zn(2+) as cofactor.

The catalysed reaction is an S-(2-hydroxyacyl)glutathione + H2O = a 2-hydroxy carboxylate + glutathione + H(+). It participates in secondary metabolite metabolism; methylglyoxal degradation; (R)-lactate from methylglyoxal: step 2/2. Its function is as follows. Thiolesterase that catalyzes the hydrolysis of S-D-lactoyl-glutathione to form glutathione and D-lactic acid. In Pseudomonas putida (strain W619), this protein is Hydroxyacylglutathione hydrolase.